Consider the following 352-residue polypeptide: Ion-translocating oxidoreductase complex subunit D (352 aa).

4 helical membrane-spanning segments follow: residues 20–40 (IMLL…WFFG), 42–62 (GTLV…ALVL), 89–109 (IPPL…VIIA), and 123–143 (PAMI…TSWL). Thr-187 is modified (FMN phosphoryl threonine). Transmembrane regions (helical) follow at residues 214 to 234 (ILAG…GVWL), 242 to 262 (WHIP…GWLF), 267 to 287 (LAAP…FFIL), 301 to 321 (LIFG…GGYP), and 322 to 342 (DGVA…DYYT).

The protein belongs to the NqrB/RnfD family. The complex is composed of six subunits: RsxA, RsxB, RsxC, RsxD, RsxE and RsxG. It depends on FMN as a cofactor.

Its subcellular location is the cell inner membrane. Its function is as follows. Part of a membrane-bound complex that couples electron transfer with translocation of ions across the membrane. Required to maintain the reduced state of SoxR. This is Ion-translocating oxidoreductase complex subunit D from Escherichia coli O127:H6 (strain E2348/69 / EPEC).